The following is an 883-amino-acid chain: Envelope glycoprotein B (883 aa).

An N-terminal signal peptide occupies residues 1–31 (MQSYIAVNIDMASLKMLICVCVAILIPSTLS). Over 32 to 750 (QDSHGIAGII…SGIASFLSNP (719 aa)) the chain is Virion surface. Intrachain disulfides connect Cys-77-Cys-535, Cys-94-Cys-491, Cys-167-Cys-229, Cys-321-Cys-369, and Cys-558-Cys-608. Residues Asn-102 and Asn-121 are each glycosylated (N-linked (GlcNAc...) asparagine; by host). The involved in fusion and/or binding to host membrane stretch occupies residues 134–140 (TWALFSR). N-linked (GlcNAc...) asparagine; by host glycosylation occurs at Asn-211. The involved in fusion and/or binding to host membrane stretch occupies residues 216-223 (HQTLGYRT). N-linked (GlcNAc...) asparagine; by host glycosylation is found at Asn-262 and Asn-360. The interval 428–457 (QNHLPRGRERRQAAGRRTASLQSGPQGDRI) is disordered. 3 N-linked (GlcNAc...) asparagine; by host glycosylation sites follow: Asn-579, Asn-635, and Asn-649. 2 hydrophobic membrane proximal region regions span residues 694 to 748 (IDTV…SFLS) and 724 to 744 (ALGT…SGIA). Residues 751-771 (FAALGIGIAVVVSIILGLLAF) form a helical membrane-spanning segment. The Intravirion portion of the chain corresponds to 772–883 (KYVMNLKSNP…PSWAEESEDE (112 aa)). The tract at residues 791–817 (PPAGTPPRPSRRYYKDEEEVEEDSDED) is disordered. Positions 806–817 (DEEEVEEDSDED) are enriched in acidic residues. Residues 868–871 (YPLL) carry the Internalization motif motif.

Belongs to the herpesviridae glycoprotein B family. Homotrimer; disulfide-linked. Binds to heparan sulfate proteoglycans. Interacts with gH/gL heterodimer. In terms of processing, a proteolytic cleavage by host furin generates two subunits that remain linked by disulfide bonds.

The protein localises to the virion membrane. It localises to the host cell membrane. Its subcellular location is the host endosome membrane. The protein resides in the host Golgi apparatus membrane. Functionally, envelope glycoprotein that forms spikes at the surface of virion envelope. Essential for the initial attachment to heparan sulfate moieties of the host cell surface proteoglycans. Involved in fusion of viral and cellular membranes leading to virus entry into the host cell. Following initial binding to its host receptors, membrane fusion is mediated by the fusion machinery composed at least of gB and the heterodimer gH/gL. May be involved in the fusion between the virion envelope and the outer nuclear membrane during virion egress. The chain is Envelope glycoprotein B from Gallus gallus (Chicken).